A 1291-amino-acid polypeptide reads, in one-letter code: Period circadian protein homolog 1 (1291 aa).

Residues 1–134 (MSGPLEGADG…SSEQSARART (134 aa)) are disordered. The interaction with BTRC stretch occupies residues 1-151 (MSGPLEGADG…LRELKLRLPP (151 aa)). The span at 48 to 115 (NSNGSSGNES…AYSLLSASSE (68 aa)) shows a compositional bias: low complexity. Polar residues predominate over residues 116–132 (QDNPSTSGCSSEQSARA). Phosphothreonine; by CSNK1E is present on Thr-121. Phosphoserine; by CSNK1E occurs at positions 122 and 126. A Nuclear export signal 1 motif is present at residues 138-147 (LMTALRELKL). PAS domains lie at 208 to 275 (ITSE…PSRL) and 348 to 414 (YEAP…KILQ). The 44-residue stretch at 422 to 465 (HSPIRFCARNGEYVTMDTSWAGFVHPWSRKVAFVLGRHKVRTAP) folds into the PAC domain. The short motif at 489–498 (LSEQIHRLLL) is the Nuclear export signal 2 element. Disordered stretches follow at residues 508–544 (GLCG…PAPV) and 647–698 (TKRK…KEPV). Composition is skewed to low complexity over residues 513–533 (GPLM…SNGG) and 652–662 (ASSSSYTASSA). Positions 596–815 (ELEVAPVPDQ…GLDTSSVAPS (220 aa)) are required for phosphorylation by CSNK1E. Phosphoserine occurs at positions 661, 663, and 704. Disordered stretches follow at residues 749–772 (GLAP…TPDA), 809–873 (TSSV…PPAT), and 938–1037 (SQAP…ALSG). Positions 751–769 (APGPAPSPAPSPTVAPDPT) are enriched in pro residues. Ser-815 bears the Phosphoserine mark. The short motif at 824 to 840 (IPPGRRHHCRSKAKRSR) is the Nuclear localization signal element. The segment covering 827-846 (GRRHHCRSKAKRSRHHHHQT) has biased composition (basic residues). 2 stretches are compositionally biased toward pro residues: residues 859 to 873 (SPVP…PPAT) and 955 to 965 (PSLPPPPLSPP). The span at 973 to 985 (FNSRCSSPLQLNL) shows a compositional bias: polar residues. Phosphoserine is present on residues Ser-978 and Ser-979. The Nuclear export signal 3 motif lies at 981 to 988 (LQLNLLQL). An LXXLL motif is present at residues 1042–1046 (LELLL). Positions 1051–1061 (RSGTGSAASGS) are enriched in low complexity. Disordered regions lie at residues 1051–1099 (RSGT…YFGS) and 1207–1291 (SVQD…NSTS). Positions 1062 to 1076 (LGSGLGSGSGSGSHE) are enriched in gly residues. Residues 1077–1094 (GGSTSASITRSSQSSHTS) show a composition bias toward low complexity. The CRY binding domain stretch occupies residues 1148-1291 (SRDAASVLKQ…ALPAEENSTS (144 aa)). Over residues 1235–1248 (GEGGGCGVGGGGGD) the composition is skewed to gly residues. Positions 1253–1267 (AQTQIGAKGSSSQDS) are enriched in polar residues.

Homodimer. Component of the circadian core oscillator, which includes the CRY proteins, CLOCK or NPAS2, BMAL1 or BMAL2, CSNK1D and/or CSNK1E, TIMELESS, and the PER proteins. Interacts directly with TIMELESS. Interacts directly with PER2, PER3, CRY1 and CRY2. Interacts with BMAL1 and CLOCK. Interacts with GPRASP1. Interacts (phosphorylated) with BTRC and FBXW11; the interactions trigger proteasomal degradation. Interacts with NONO and SFPQ. Interacts with WDR5. Interacts with U2AF1L4 (Isoform 3). Interacts with USP2. Interacts with HNF4A. Phosphorylated on serine residues by CSNK1D, CSNK1E and probably also by CSNK1G2. Phosphorylation by CSNK1D or CSNK1E promotes nuclear location of PER proteins as well as ubiquitination and subsequent degradation. May be dephosphorylated by PP1. In terms of processing, ubiquitinated; requires phosphorylation by CSNK1E and interaction with BTRC and FBXW11. Deubiquitinated by USP2. In brain, highest expression is observed in the SCN. Highly expressed in the pyramidal cell layer of the piriform cortex, the periventricular part of the caudate-putamen, many thalamic nuclei, and the granular layer of the cerebellar cortex. Weaker expression is detected in most area of the brain, including cortical and non cortical structures. Expression but no oscillations occurs in the glomerular and mitral cell layers of the olfactory bulb, the internal granular layer of the cerebellum, the cornu ammonis and dentate gyrus of the hippocampus, the cerebral and piriform cortices. Expressed in the renal cortex (at protein level). Also found in heart, brain, bladder, lumbar spinal cord, spleen, lung, liver, skeletal muscle and testis.

Its subcellular location is the nucleus. The protein resides in the cytoplasm. Functionally, transcriptional repressor which forms a core component of the circadian clock. The circadian clock, an internal time-keeping system, regulates various physiological processes through the generation of approximately 24 hour circadian rhythms in gene expression, which are translated into rhythms in metabolism and behavior. It is derived from the Latin roots 'circa' (about) and 'diem' (day) and acts as an important regulator of a wide array of physiological functions including metabolism, sleep, body temperature, blood pressure, endocrine, immune, cardiovascular, and renal function. Consists of two major components: the central clock, residing in the suprachiasmatic nucleus (SCN) of the brain, and the peripheral clocks that are present in nearly every tissue and organ system. Both the central and peripheral clocks can be reset by environmental cues, also known as Zeitgebers (German for 'timegivers'). The predominant Zeitgeber for the central clock is light, which is sensed by retina and signals directly to the SCN. The central clock entrains the peripheral clocks through neuronal and hormonal signals, body temperature and feeding-related cues, aligning all clocks with the external light/dark cycle. Circadian rhythms allow an organism to achieve temporal homeostasis with its environment at the molecular level by regulating gene expression to create a peak of protein expression once every 24 hours to control when a particular physiological process is most active with respect to the solar day. Transcription and translation of core clock components (CLOCK, NPAS2, BMAL1, BMAL2, PER1, PER2, PER3, CRY1 and CRY2) plays a critical role in rhythm generation, whereas delays imposed by post-translational modifications (PTMs) are important for determining the period (tau) of the rhythms (tau refers to the period of a rhythm and is the length, in time, of one complete cycle). A diurnal rhythm is synchronized with the day/night cycle, while the ultradian and infradian rhythms have a period shorter and longer than 24 hours, respectively. Disruptions in the circadian rhythms contribute to the pathology of cardiovascular diseases, cancer, metabolic syndromes and aging. A transcription/translation feedback loop (TTFL) forms the core of the molecular circadian clock mechanism. Transcription factors, CLOCK or NPAS2 and BMAL1 or BMAL2, form the positive limb of the feedback loop, act in the form of a heterodimer and activate the transcription of core clock genes and clock-controlled genes (involved in key metabolic processes), harboring E-box elements (5'-CACGTG-3') within their promoters. The core clock genes: PER1/2/3 and CRY1/2 which are transcriptional repressors form the negative limb of the feedback loop and interact with the CLOCK|NPAS2-BMAL1|BMAL2 heterodimer inhibiting its activity and thereby negatively regulating their own expression. This heterodimer also activates nuclear receptors NR1D1/2 and RORA/B/G, which form a second feedback loop and which activate and repress BMAL1 transcription, respectively. Regulates circadian target genes expression at post-transcriptional levels, but may not be required for the repression at transcriptional level. Controls PER2 protein decay. Represses CRY2 preventing its repression on CLOCK/BMAL1 target genes such as FXYD5 and SCNN1A in kidney and PPARA in liver. Besides its involvement in the maintenance of the circadian clock, has an important function in the regulation of several processes. Participates in the repression of glucocorticoid receptor NR3C1/GR-induced transcriptional activity by reducing the association of NR3C1/GR to glucocorticoid response elements (GREs) by BMAL1:CLOCK. Plays a role in the modulation of the neuroinflammatory state via the regulation of inflammatory mediators release, such as CCL2 and IL6. In spinal astrocytes, negatively regulates the MAPK14/p38 and MAPK8/JNK MAPK cascades as well as the subsequent activation of NFkappaB. Coordinately regulates the expression of multiple genes that are involved in the regulation of renal sodium reabsorption. Can act as gene expression activator in a gene and tissue specific manner, in kidney enhances WNK1 and SLC12A3 expression in collaboration with CLOCK. Modulates hair follicle cycling. Represses the CLOCK-BMAL1 induced transcription of BHLHE40/DEC1. The protein is Period circadian protein homolog 1 (Per1) of Mus musculus (Mouse).